The sequence spans 732 residues: E3 ubiquitin-protein ligase hel2 (732 aa).

The tract at residues 1-48 is disordered; that stretch reads MSPSGPNLNNKEHNRASEKKNSRTHNKKTNRNQSKEKPVSSRSVETPK. The span at 10–21 shows a compositional bias: basic and acidic residues; the sequence is NKEHNRASEKKN. The RING-type zinc-finger motif lies at 81 to 121; that stretch reads CFICAEGITYSCVLPCNHRMCHVCALRLRALYKTKECTFCK. In terms of domain architecture, LIM zinc-binding spans 245–315; that stretch reads PKCEFCNTHF…RECLERKFVV (71 aa). 3 disordered regions span residues 345-380, 411-501, and 623-732; these read IIPQ…NETA, DFGF…QHQQ, and HDGP…FHIG. Polar residues-rich tracts occupy residues 366-380 and 415-433; these read SSTP…NETA and TLSN…TRTI. Positions 457–468 are enriched in low complexity; that stretch reads SSSAPSVPVSAP. Serine 482 carries the post-translational modification Phosphoserine. Composition is skewed to polar residues over residues 490–501 and 629–654; these read PMASSEQAQHQQ and SAPS…NTPS. The segment covering 701–713 has biased composition (low complexity); that stretch reads STPNTSSNRNSNT.

It belongs to the ZNF598/HEL2 family.

It is found in the cytoplasm. It carries out the reaction S-ubiquitinyl-[E2 ubiquitin-conjugating enzyme]-L-cysteine + [acceptor protein]-L-lysine = [E2 ubiquitin-conjugating enzyme]-L-cysteine + N(6)-ubiquitinyl-[acceptor protein]-L-lysine.. The protein operates within protein modification; protein ubiquitination. Its function is as follows. E3 ubiquitin-protein ligase that plays a key role in the ribosome quality control (RQC), a pathway that takes place when a ribosome has stalled during translation, leading to degradation of nascent peptide chains. Activated when ribosomes are stalled within an mRNA following translation of prematurely polyadenylated mRNAs. Acts as a ribosome collision sensor: specifically recognizes and binds collided ribosome and ubiquitinates the 40S ribosomal proteins rps20/uS10 and rps3/uS3. Catalyzes 'Lys-63'-linked polyubiquitination of rps20/uS10, promoting recruitment of the RQT (ribosome quality control trigger) complex, which drives the disassembly of stalled ribosomes, followed by degradation of nascent peptides. The sequence is that of E3 ubiquitin-protein ligase hel2 from Schizosaccharomyces pombe (strain 972 / ATCC 24843) (Fission yeast).